The primary structure comprises 140 residues: Transcription antitermination protein NusB (140 aa).

This sequence belongs to the NusB family.

Its function is as follows. Involved in transcription antitermination. Required for transcription of ribosomal RNA (rRNA) genes. Binds specifically to the boxA antiterminator sequence of the ribosomal RNA (rrn) operons. This chain is Transcription antitermination protein NusB, found in Leptospira biflexa serovar Patoc (strain Patoc 1 / Ames).